A 213-amino-acid chain; its full sequence is ATP-dependent dethiobiotin synthetase BioD (213 aa).

Position 13–18 (13–18) interacts with ATP; that stretch reads GIGKTV. Residue threonine 17 participates in Mg(2+) binding. The active site involves lysine 33. Glutamate 100 contacts Mg(2+). Residues 100–103 and 184–186 each bind ATP; these read EGAG and PHL.

The protein belongs to the dethiobiotin synthetase family. Homodimer. Requires Mg(2+) as cofactor.

The protein localises to the cytoplasm. It carries out the reaction (7R,8S)-7,8-diammoniononanoate + CO2 + ATP = (4R,5S)-dethiobiotin + ADP + phosphate + 3 H(+). It functions in the pathway cofactor biosynthesis; biotin biosynthesis; biotin from 7,8-diaminononanoate: step 1/2. Functionally, catalyzes a mechanistically unusual reaction, the ATP-dependent insertion of CO2 between the N7 and N8 nitrogen atoms of 7,8-diaminopelargonic acid (DAPA, also called 7,8-diammoniononanoate) to form a ureido ring. The sequence is that of ATP-dependent dethiobiotin synthetase BioD from Rhodopseudomonas palustris (strain BisA53).